Here is a 246-residue protein sequence, read N- to C-terminus: Carboxy-S-adenosyl-L-methionine synthase (246 aa).

S-adenosyl-L-methionine-binding positions include Tyr-39, 64–66 (GCS), 89–90 (DN), 117–118 (DI), Asn-132, and Arg-199.

This sequence belongs to the class I-like SAM-binding methyltransferase superfamily. Cx-SAM synthase family. As to quaternary structure, homodimer.

It carries out the reaction prephenate + S-adenosyl-L-methionine = carboxy-S-adenosyl-L-methionine + 3-phenylpyruvate + H2O. Its function is as follows. Catalyzes the conversion of S-adenosyl-L-methionine (SAM) to carboxy-S-adenosyl-L-methionine (Cx-SAM). The polypeptide is Carboxy-S-adenosyl-L-methionine synthase (Erwinia tasmaniensis (strain DSM 17950 / CFBP 7177 / CIP 109463 / NCPPB 4357 / Et1/99)).